A 415-amino-acid chain; its full sequence is Gamma-glutamyl phosphate reductase (415 aa).

It belongs to the gamma-glutamyl phosphate reductase family.

It localises to the cytoplasm. The enzyme catalyses L-glutamate 5-semialdehyde + phosphate + NADP(+) = L-glutamyl 5-phosphate + NADPH + H(+). It participates in amino-acid biosynthesis; L-proline biosynthesis; L-glutamate 5-semialdehyde from L-glutamate: step 2/2. In terms of biological role, catalyzes the NADPH-dependent reduction of L-glutamate 5-phosphate into L-glutamate 5-semialdehyde and phosphate. The product spontaneously undergoes cyclization to form 1-pyrroline-5-carboxylate. This is Gamma-glutamyl phosphate reductase from Bacillus subtilis (strain 168).